The sequence spans 675 residues: UvrABC system protein B (675 aa).

The Helicase ATP-binding domain occupies 32–417 (EGLSDGLAYQ…EHAGQVVEQV (386 aa)). 45–52 (GVTGSGKT) serves as a coordination point for ATP. Positions 98-121 (YYDYYQPEAYVPSRDLFIEKDSAI) match the Beta-hairpin motif. The 167-residue stretch at 436 to 602 (QVDDLMSEIN…QIKKQVKDII (167 aa)) folds into the Helicase C-terminal domain. In terms of domain architecture, UVR spans 634–669 (IKEIAKLEKAMQQAARDLQFEEAAVLRDRISNIKEN).

The protein belongs to the UvrB family. In terms of assembly, forms a heterotetramer with UvrA during the search for lesions. Interacts with UvrC in an incision complex.

It is found in the cytoplasm. Its function is as follows. The UvrABC repair system catalyzes the recognition and processing of DNA lesions. A damage recognition complex composed of 2 UvrA and 2 UvrB subunits scans DNA for abnormalities. Upon binding of the UvrA(2)B(2) complex to a putative damaged site, the DNA wraps around one UvrB monomer. DNA wrap is dependent on ATP binding by UvrB and probably causes local melting of the DNA helix, facilitating insertion of UvrB beta-hairpin between the DNA strands. Then UvrB probes one DNA strand for the presence of a lesion. If a lesion is found the UvrA subunits dissociate and the UvrB-DNA preincision complex is formed. This complex is subsequently bound by UvrC and the second UvrB is released. If no lesion is found, the DNA wraps around the other UvrB subunit that will check the other stand for damage. The protein is UvrABC system protein B of Neisseria gonorrhoeae (strain ATCC 700825 / FA 1090).